A 371-amino-acid polypeptide reads, in one-letter code: Phospho-N-acetylmuramoyl-pentapeptide-transferase (371 aa).

9 consecutive transmembrane segments (helical) span residues Thr25–Ala45, Met77–Ala94, Ile136–Ser156, Leu172–Phe192, Gly204–Ala224, Gly240–Trp260, Phe269–Ile289, Val296–Phe316, and Lys348–Leu368.

Belongs to the glycosyltransferase 4 family. MraY subfamily. It depends on Mg(2+) as a cofactor.

The protein localises to the cell inner membrane. It catalyses the reaction UDP-N-acetyl-alpha-D-muramoyl-L-alanyl-gamma-D-glutamyl-meso-2,6-diaminopimeloyl-D-alanyl-D-alanine + di-trans,octa-cis-undecaprenyl phosphate = di-trans,octa-cis-undecaprenyl diphospho-N-acetyl-alpha-D-muramoyl-L-alanyl-D-glutamyl-meso-2,6-diaminopimeloyl-D-alanyl-D-alanine + UMP. The protein operates within cell wall biogenesis; peptidoglycan biosynthesis. Catalyzes the initial step of the lipid cycle reactions in the biosynthesis of the cell wall peptidoglycan: transfers peptidoglycan precursor phospho-MurNAc-pentapeptide from UDP-MurNAc-pentapeptide onto the lipid carrier undecaprenyl phosphate, yielding undecaprenyl-pyrophosphoryl-MurNAc-pentapeptide, known as lipid I. This Opitutus terrae (strain DSM 11246 / JCM 15787 / PB90-1) protein is Phospho-N-acetylmuramoyl-pentapeptide-transferase.